Reading from the N-terminus, the 1401-residue chain is DNA-directed RNA polymerase subunit beta' (1401 aa).

The Zn(2+) site is built by C70, C72, C85, and C88. Residues D460, D462, and D464 each contribute to the Mg(2+) site. The Zn(2+) site is built by C808, C882, C889, and C892.

Belongs to the RNA polymerase beta' chain family. The RNAP catalytic core consists of 2 alpha, 1 beta, 1 beta' and 1 omega subunit. When a sigma factor is associated with the core the holoenzyme is formed, which can initiate transcription. Requires Mg(2+) as cofactor. Zn(2+) is required as a cofactor.

The catalysed reaction is RNA(n) + a ribonucleoside 5'-triphosphate = RNA(n+1) + diphosphate. Its function is as follows. DNA-dependent RNA polymerase catalyzes the transcription of DNA into RNA using the four ribonucleoside triphosphates as substrates. The polypeptide is DNA-directed RNA polymerase subunit beta' (Legionella pneumophila subsp. pneumophila (strain Philadelphia 1 / ATCC 33152 / DSM 7513)).